A 487-amino-acid polypeptide reads, in one-letter code: b(0,+)-type amino acid transporter 1 (487 aa).

The span at 1–20 shows a compositional bias: basic and acidic residues; it reads MEETSPRRRREDEKSVHSTE. The tract at residues 1 to 23 is disordered; that stretch reads MEETSPRRRREDEKSVHSTEPKT. The Cytoplasmic segment spans residues 1–31; sequence MEETSPRRRREDEKSVHSTEPKTTSLQKEVG. Ser-18 is modified (phosphoserine). Residues 32 to 55 traverse the membrane as a helical segment; the sequence is LLSGICIIVGTIIGSGIFISPKSV. Residue 43–47 coordinates L-arginine; that stretch reads IIGSG. Residues 56–62 are Extracellular-facing; it reads LANTESV. The chain crosses the membrane as a helical span at residues 63–84; that stretch reads GPCLIIWAACGVLATLGALCFA. Over 85 to 110 the chain is Cytoplasmic; it reads ELGTMITKSGGEYPYLMEAFGPIPAY. A helical transmembrane segment spans residues 111–137; that stretch reads LFSWTSLIVMKPSSFAIICLSFSEYVC. The Extracellular portion of the chain corresponds to 138 to 147; sequence AAFYLGCRPP. Helical transmembrane passes span 148-169 and 170-193; these read AVVV…NALS and VRLG…IIII. Residues 194–217 are Extracellular-facing; it reads SGLVLLAQGNVKNFQNSFEGSQTS. The helical transmembrane segment at 218–238 threads the bilayer; it reads VGSISLAFYNGLWAYDGWNQL. Asp-233 is a binding site for L-arginine. At 239-251 the chain is on the cytoplasmic side; the sequence is NYITEELRNPYRN. A helical membrane pass occupies residues 252-274; that stretch reads LPMAIVIGIPLVTVCYILMNIAY. The Extracellular portion of the chain corresponds to 275 to 302; the sequence is FTVMTPTELLQSQAVAVTFGDRVLYPAS. A helical membrane pass occupies residues 303–325; sequence WVVPLFVAFSTIGAANGTCFTAG. The Cytoplasmic segment spans residues 326-351; that stretch reads RLIYVAGREGHMLKVLSYISVKRLTP. A run of 2 helical transmembrane segments spans residues 352–370 and 371–391; these read APAL…IPGD and INSL…MTIL. At 392 to 410 the chain is on the cytoplasmic side; the sequence is GLVVMRFTRKDLERPIKVP. The helical transmembrane segment at 411-431 threads the bilayer; the sequence is IFIPIIVILVSVFLILAPIIS. The Extracellular segment spans residues 432 to 434; it reads SPA. A helical membrane pass occupies residues 435-450; that stretch reads WEYLYCVLFILSGLIF. Residues 451 to 487 lie on the Cytoplasmic side of the membrane; it reads YFLFVHYKFRWAQKISRPITKHLQMLMEVVPPEKDPE.

The protein belongs to the amino acid-polyamine-organocation (APC) superfamily. As to quaternary structure, disulfide-linked heterodimer composed of the catalytic light chain subunit SLC7A9 and the heavy chain subunit SLC3A1. The heterodimer is the minimal functional unit. Assembles in heterotetramers (dimers of heterodimers) and higher order oligomers; the oligomerization is mediated by SLC3A1 likely to prevent degradation and facilitate heteromer trafficking to the plasma membrane. Interacts with CAV1. Outer medulla of kidney (at protein level). Kidney and small intestine. In the kidney localized to the apical membrane of the proximal tubules.

It localises to the apical cell membrane. It carries out the reaction L-leucine(out) + L-arginine(in) = L-leucine(in) + L-arginine(out). It catalyses the reaction L-histidine(out) + L-arginine(in) = L-histidine(in) + L-arginine(out). The catalysed reaction is L-arginine(in) + L-phenylalanine(out) = L-arginine(out) + L-phenylalanine(in). The enzyme catalyses L-cysteine(out) + L-arginine(in) = L-cysteine(in) + L-arginine(out). It carries out the reaction L-cystine(out) + L-arginine(in) = L-cystine(in) + L-arginine(out). It catalyses the reaction L-lysine(out) + L-arginine(in) = L-lysine(in) + L-arginine(out). In terms of biological role, associates with SLC3A1 to form a functional transporter complex that mediates the electrogenic exchange between cationic amino acids and neutral amino acids, with a stoichiometry of 1:1. Has system b(0,+)-like activity with high affinity for extracellular cationic amino acids and L-cystine and lower affinity for intracellular neutral amino acids. Substrate exchange is driven by high concentration of intracellular neutral amino acids and the intracellular reduction of L-cystine to L-cysteine. Required for reabsorption of L-cystine and dibasic amino acids across the brush border membrane in renal proximal tubules. This is b(0,+)-type amino acid transporter 1 (Slc7a9) from Rattus norvegicus (Rat).